The chain runs to 466 residues: Citrate synthase, mitochondrial (466 aa).

The transit peptide at 1-27 (MALLTAAARLLGTKNASCLVLAARHAS) directs the protein to the mitochondrion. The short motif at 2 to 21 (ALLTAAARLLGTKNASCLVL) is the SIFI-degron element. K57 carries the N6-succinyllysine modification. K76 is subject to N6-acetyllysine; alternate. An N6-succinyllysine; alternate modification is found at K76. N6-succinyllysine occurs at positions 103 and 193. Residue H301 is part of the active site. An N6-acetyllysine; alternate mark is found at K321 and K327. 2 positions are modified to N6-succinyllysine; alternate: K321 and K327. The active site involves H347. R356 is a binding site for oxaloacetate. The residue at position 375 (K375) is an N6-acetyllysine; alternate. At K375 the chain carries N6-succinyllysine; alternate. K382 is subject to N6-acetyllysine. K393 is modified (N6-acetyllysine; alternate). At K393 the chain carries N6-succinyllysine; alternate. K395 carries the N6,N6,N6-trimethyllysine modification. The active site involves D402. Oxaloacetate contacts are provided by R428 and R448. The residue at position 450 (K450) is an N6-succinyllysine. K459 carries the N6-acetyllysine; alternate modification. K459 bears the N6-succinyllysine; alternate mark.

This sequence belongs to the citrate synthase family. As to quaternary structure, homodimer. Methylated. Trimethylation at Lys-395 by CSKMT decreases citrate synthase activity. In terms of processing, in response to mitochondrial stress, the precursor protein is ubiquitinated by the SIFI complex in the cytoplasm before mitochondrial import, leading to its degradation. Within the SIFI complex, UBR4 initiates ubiquitin chain that are further elongated or branched by KCMF1.

The protein resides in the mitochondrion matrix. It carries out the reaction oxaloacetate + acetyl-CoA + H2O = citrate + CoA + H(+). Its pathway is carbohydrate metabolism; tricarboxylic acid cycle; isocitrate from oxaloacetate: step 1/2. Functionally, key enzyme of the Krebs tricarboxylic acid cycle which catalyzes the synthesis of citrate from acetyl coenzyme A and oxaloacetate. This chain is Citrate synthase, mitochondrial (CS), found in Macaca fascicularis (Crab-eating macaque).